We begin with the raw amino-acid sequence, 161 residues long: ADKERAQRATSNVFARLPQKLMQEMKEAFTMIDQNRDGFIDINDLKEMFSSLGRTPDDKELTAMLKEAPGPLNFTMFLSIFSDKLSGTDTEETLRNAFAMFDELDTKKLNIEYIKDLLENMGDNFTKDEMRMTFKEAPVTGGKFDYVKFTAMIKGSGEEEA.

Ala1 is subject to Blocked amino end (Ala). EF-hand domains are found at residues 20–55 (KLMQEMKEAFTMIDQNRDGFIDINDLKEMFSSLGRT) and 89–124 (DTEETLRNAFAMFDELDTKKLNIEYIKDLLENMGDN). Ca(2+)-binding residues include Asp33, Asn35, Asp37, and Asp44.

In molluscan muscle, calcium regulation is associated with myosin rather than with actin. Muscle myosin contains two types of light chains: the catalytic light chain, essential for ATPase activity, and the regulatory light chain, a calcium-binding protein responsible for Ca(2+) dependent binding and Ca(2+) dependent Mg-ATPase activity. This is Myosin regulatory light chain A, smooth adductor muscle from Mizuhopecten yessoensis (Japanese scallop).